The following is a 185-amino-acid chain: RRM domain-containing protein ECU09_1470 (185 aa).

RRM domains follow at residues 8–87 (NQLA…YAKR) and 101–170 (KKVY…PAYE).

In Encephalitozoon cuniculi (strain GB-M1) (Microsporidian parasite), this protein is RRM domain-containing protein ECU09_1470.